The chain runs to 331 residues: UPF0324 membrane protein YdhF (331 aa).

8 consecutive transmembrane segments (helical) span residues 2–20, 24–46, 82–104, 114–136, 148–170, 204–226, 247–269, and 308–330; these read SILP…SYLL, IFHS…NLYF, LGFS…VLFM, VSAL…VEPV, IAMV…TWMF, TLAT…YFGF, SFLP…IHFV, and LIYG…SLLI.

Belongs to the UPF0324 family.

It localises to the cell membrane. The sequence is that of UPF0324 membrane protein YdhF (ydhF) from Lactococcus lactis subsp. lactis (strain IL1403) (Streptococcus lactis).